A 764-amino-acid polypeptide reads, in one-letter code: 1,4-alpha-glucan branching enzyme GlgB (764 aa).

The active-site Nucleophile is the aspartate 431. The active-site Proton donor is glutamate 484.

This sequence belongs to the glycosyl hydrolase 13 family. GlgB subfamily. As to quaternary structure, monomer.

It carries out the reaction Transfers a segment of a (1-&gt;4)-alpha-D-glucan chain to a primary hydroxy group in a similar glucan chain.. The protein operates within glycan biosynthesis; glycogen biosynthesis. Functionally, catalyzes the formation of the alpha-1,6-glucosidic linkages in glycogen by scission of a 1,4-alpha-linked oligosaccharide from growing alpha-1,4-glucan chains and the subsequent attachment of the oligosaccharide to the alpha-1,6 position. This chain is 1,4-alpha-glucan branching enzyme GlgB, found in Synechococcus sp. (strain CC9902).